Reading from the N-terminus, the 157-residue chain is 6,7-dimethyl-8-ribityllumazine synthase (157 aa).

5-amino-6-(D-ribitylamino)uracil is bound by residues Phe22, 57–59, and 81–83; these read AYE and TVI. Position 86 to 87 (86 to 87) interacts with (2S)-2-hydroxy-3-oxobutyl phosphate; sequence GT. The active-site Proton donor is His89. 5-amino-6-(D-ribitylamino)uracil is bound at residue Phe114. Arg128 contributes to the (2S)-2-hydroxy-3-oxobutyl phosphate binding site.

This sequence belongs to the DMRL synthase family. As to quaternary structure, forms an icosahedral capsid composed of 60 subunits, arranged as a dodecamer of pentamers.

The enzyme catalyses (2S)-2-hydroxy-3-oxobutyl phosphate + 5-amino-6-(D-ribitylamino)uracil = 6,7-dimethyl-8-(1-D-ribityl)lumazine + phosphate + 2 H2O + H(+). It functions in the pathway cofactor biosynthesis; riboflavin biosynthesis; riboflavin from 2-hydroxy-3-oxobutyl phosphate and 5-amino-6-(D-ribitylamino)uracil: step 1/2. Functionally, catalyzes the formation of 6,7-dimethyl-8-ribityllumazine by condensation of 5-amino-6-(D-ribitylamino)uracil with 3,4-dihydroxy-2-butanone 4-phosphate. This is the penultimate step in the biosynthesis of riboflavin. In Haemophilus influenzae (strain 86-028NP), this protein is 6,7-dimethyl-8-ribityllumazine synthase.